Here is a 339-residue protein sequence, read N- to C-terminus: Lipoate-protein ligase A (339 aa).

The region spanning 29–216 (DPSQQVLFLW…SFENFYAGKA (188 aa)) is the BPL/LPL catalytic domain. Residues Arg71, 76 to 79 (GAVF), and Lys134 contribute to the ATP site. Lys134 contacts (R)-lipoate.

This sequence belongs to the LplA family. Monomer.

It is found in the cytoplasm. The catalysed reaction is L-lysyl-[lipoyl-carrier protein] + (R)-lipoate + ATP = N(6)-[(R)-lipoyl]-L-lysyl-[lipoyl-carrier protein] + AMP + diphosphate + H(+). The protein operates within protein modification; protein lipoylation via exogenous pathway; protein N(6)-(lipoyl)lysine from lipoate: step 1/2. Its pathway is protein modification; protein lipoylation via exogenous pathway; protein N(6)-(lipoyl)lysine from lipoate: step 2/2. Functionally, catalyzes both the ATP-dependent activation of exogenously supplied lipoate to lipoyl-AMP and the transfer of the activated lipoyl onto the lipoyl domains of lipoate-dependent enzymes. In Bdellovibrio bacteriovorus (strain ATCC 15356 / DSM 50701 / NCIMB 9529 / HD100), this protein is Lipoate-protein ligase A.